Here is a 97-residue protein sequence, read N- to C-terminus: Single insulin-like growth factor-binding domain protein-1 (97 aa).

The signal sequence occupies residues 1-19 (MKTLFVFAVGIMLSMRASA). The IGFBP N-terminal domain occupies 20 to 96 (FTCPECRPEL…PEIVGTCVKI (77 aa)). An O-linked (GalNAc...) threonine glycan is attached at Thr-21. 6 disulfide bridges follow: Cys-22-Cys-45, Cys-25-Cys-47, Cys-30-Cys-48, Cys-36-Cys-51, Cys-59-Cys-75, and Cys-69-Cys-93.

As to expression, expressed in hemocytes.

It is found in the secreted. Its function is as follows. Has a role in the innate immune system. This is Single insulin-like growth factor-binding domain protein-1 from Cupiennius salei (American wandering spider).